We begin with the raw amino-acid sequence, 429 residues long: Probable M18 family aminopeptidase 2 (429 aa).

Zn(2+) is bound by residues His-82, His-156, and His-401.

Belongs to the peptidase M18 family. It depends on Zn(2+) as a cofactor.

The chain is Probable M18 family aminopeptidase 2 from Ectopseudomonas mendocina (strain ymp) (Pseudomonas mendocina).